A 225-amino-acid chain; its full sequence is MKQVFPNDWQEILADELEKTYYHTLRQFIANEYSTQTIYPPMQDVMNAFYTTAYQDVKVIILGQDPYHGPNQAHGLSFSVKPGIPHPPSLRNMLQELQDDLGCPIPQDGTLTKWAEQGVMLLNTVLTVRAGQANSHKDQGWEQFTDAVIDKLAAREEPLIFVLWGKPAQRKKQLICKHATPHVILEAPHPSPLSAYRGFFGSKPYSKINQQLVEWDKRPIDWCLA.

The Proton acceptor role is filled by Asp-65.

The protein belongs to the uracil-DNA glycosylase (UDG) superfamily. UNG family.

It is found in the cytoplasm. The catalysed reaction is Hydrolyzes single-stranded DNA or mismatched double-stranded DNA and polynucleotides, releasing free uracil.. Its function is as follows. Excises uracil residues from the DNA which can arise as a result of misincorporation of dUMP residues by DNA polymerase or due to deamination of cytosine. This is Uracil-DNA glycosylase from Lysinibacillus sphaericus (strain C3-41).